We begin with the raw amino-acid sequence, 611 residues long: Leukotriene A-4 hydrolase (611 aa).

N6-acetyllysine is present on Lys73. A peptide is bound by residues 135 to 137 and 267 to 272; these read QCQ and SYGGME. Residue His296 coordinates Zn(2+). Glu297 serves as the catalytic Proton acceptor. Zn(2+) is bound by residues His300 and Glu319. Lys337 carries the post-translational modification N6-acetyllysine. The active-site Proton donor is Tyr384. Position 414 is an N6-acetyllysine (Lys414). The residue at position 416 (Ser416) is a Phosphoserine. 564-566 is an a peptide binding site; it reads RMK. Lys573 is subject to N6-acetyllysine.

The protein belongs to the peptidase M1 family. As to quaternary structure, monomer. Requires Zn(2+) as cofactor. Phosphorylation at Ser-416 inhibits leukotriene-A4 hydrolase activity. activity.

The protein localises to the cytoplasm. The enzyme catalyses leukotriene A4 + H2O = leukotriene B4. It catalyses the reaction (5S,6S)-epoxy-(18R)-hydroxy-(7E,9E,11Z,14Z,16E)-eicosapentaenoate + H2O = resolvin E1. It carries out the reaction (5S,6S)-epoxy-(18S)-hydroxy-(7E,9E,11Z,14Z,16E)-eicosapentaenoate + H2O = 18S-resolvin E1. The catalysed reaction is Release of the N-terminal residue from a tripeptide.. The protein operates within lipid metabolism; leukotriene B4 biosynthesis. Inhibited by bestatin. The epoxide hydrolase activity is restrained by suicide inactivation that involves binding of LTA4 to Tyr-379. 4-(4-benzylphenyl)thiazol-2-amine (ARM1) selectively inhibits the epoxide hydrolase activity. In terms of biological role, bifunctional zinc metalloenzyme that comprises both epoxide hydrolase (EH) and aminopeptidase activities. Acts as an epoxide hydrolase to catalyze the conversion of LTA4 to the pro-inflammatory mediator leukotriene B4 (LTB4). Also has aminopeptidase activity, with high affinity for N-terminal arginines of various synthetic tripeptides. In addition to its pro-inflammatory EH activity, may also counteract inflammation by its aminopeptidase activity, which inactivates by cleavage another neutrophil attractant, the tripeptide Pro-Gly-Pro (PGP), a bioactive fragment of collagen generated by the action of matrix metalloproteinase-9 (MMP9) and prolylendopeptidase (PREPL). Involved also in the biosynthesis of resolvin E1 and 18S-resolvin E1 from eicosapentaenoic acid, two lipid mediators that show potent anti-inflammatory and pro-resolving actions. The sequence is that of Leukotriene A-4 hydrolase (LTA4H) from Cavia porcellus (Guinea pig).